We begin with the raw amino-acid sequence, 142 residues long: Ribosomal RNA large subunit methyltransferase H (142 aa).

Glycine 89 contacts S-adenosyl-L-methionine.

Belongs to the RNA methyltransferase RlmH family. Homodimer.

The protein resides in the cytoplasm. The catalysed reaction is pseudouridine(1915) in 23S rRNA + S-adenosyl-L-methionine = N(3)-methylpseudouridine(1915) in 23S rRNA + S-adenosyl-L-homocysteine + H(+). Its function is as follows. Specifically methylates the pseudouridine at position 1915 (m3Psi1915) in 23S rRNA. The polypeptide is Ribosomal RNA large subunit methyltransferase H (Zymomonas mobilis subsp. mobilis (strain ATCC 31821 / ZM4 / CP4)).